A 118-amino-acid chain; its full sequence is uncharacterized protein (118 aa).

This sequence belongs to the transposase IS3/IS150/IS904 family.

This is an uncharacterized protein from Haemophilus influenzae (strain ATCC 51907 / DSM 11121 / KW20 / Rd).